Here is a 2388-residue protein sequence, read N- to C-terminus: Hybrid signal transduction histidine kinase M (2388 aa).

Disordered regions lie at residues 1-32 (MSNY…NNFN), 42-61 (FNTP…NSIS), 69-111 (NECN…STPI), 123-209 (NRSN…NAYP), 237-337 (TLLN…SPKL), 361-421 (SPHG…YNDN), 430-449 (TRNT…SSSF), and 486-542 (IYTP…NNNE). The span at 69–82 (NECNSGGEQSPKIK) shows a compositional bias: polar residues. Composition is skewed to low complexity over residues 83–110 (TNNN…KSTP), 125–206 (SNLN…SNSN), and 242–288 (SSNN…NNGG). Residues 293–306 (QFISSDNKYNTVGN) show a composition bias toward polar residues. Over residues 309-322 (HHHHHHQLHNHRHS) the composition is skewed to basic residues. Composition is skewed to low complexity over residues 325–337 (QGSS…SPKL), 361–399 (SPHG…NQNN), 410–419 (NNSNDSFDYN), and 432–449 (NTGY…SSSF). Residues 489-505 (PPYPQPYPQPPQLPPPS) show a composition bias toward pro residues. The segment covering 506–541 (SSSSLSKENDNVDNNNTNNNNNNNNNNNNNNNNNNN) has biased composition (low complexity). Helical transmembrane passes span 550–570 (TMNL…FLMV), 589–609 (FILI…LLVV), 645–665 (YIFL…NLFF), and 679–699 (NIST…SHIP). Positions 732 to 888 (NNDNKNKIND…NNNEEDDEEE (157 aa)) are disordered. Basic and acidic residues predominate over residues 735-744 (NKNKINDKSD). Residues 745-880 (NSNSITNNNN…NNNNNNNNNN (136 aa)) show a composition bias toward low complexity. Helical transmembrane passes span 896–916 (FQIF…LIVL), 953–973 (VQFQ…LLLV), and 1025–1045 (CSVG…WMSI). Residues 1093-1499 (RLVQNTGSII…VFELQVPMKC (407 aa)) enclose the Histidine kinase domain. The segment covering 1236 to 1257 (PIHHHRHHHRHHHHHHHHHHHH) has biased composition (basic residues). A disordered region spans residues 1236-1410 (PIHHHRHHHR…INNNINNNNN (175 aa)). A compositionally biased stretch (acidic residues) spans 1260–1274 (DDDDYDDDNDDDNNT). Positions 1286–1315 (LSDKIKDNQDENLELKKSNNDKIIENKENQ) are enriched in basic and acidic residues. Low complexity predominate over residues 1316-1410 (ENNNNNNNNN…INNNINNNNN (95 aa)). The Response regulatory 1 domain maps to 1541–1656 (KILVIDDNPN…QLTVLSQLLP (116 aa)). D1592 carries the 4-aspartylphosphate modification. 5 disordered regions span residues 1666–1702 (SNQN…NIDF), 1960–2022 (GNNS…NSSN), 2036–2121 (CKGD…DIIN), 2133–2183 (QQQL…VKSS), and 2218–2256 (NQLN…NNND). Residues 1676-1696 (SNGGGGGGGGGGGGGGGGGSG) show a composition bias toward gly residues. Over residues 1974 to 1985 (TNNNTTTTTTTT) the composition is skewed to low complexity. The span at 1986 to 2010 (QPKKSPILTSSNGSDKSEGSTGSNR) shows a compositional bias: polar residues. The segment covering 2054-2064 (DSSSSSSSSDS) has biased composition (low complexity). Residues 2065 to 2076 (HGQDDHSYRLED) show a composition bias toward basic and acidic residues. Low complexity-rich tracts occupy residues 2078 to 2109 (SISS…SGIN) and 2133 to 2165 (QQQL…LPIP). The span at 2169-2183 (INSSGASSGIKVKSS) shows a compositional bias: polar residues. Residues 2262-2383 (NILLVEDNLV…LLISLLKKLV (122 aa)) enclose the Response regulatory 2 domain. At D2313 the chain carries 4-aspartylphosphate.

Activation probably requires transfer of a phosphate group between a histidine in the kinase core (transmitter) domain and an aspartate of the receiver domain.

The protein resides in the membrane. It catalyses the reaction ATP + protein L-histidine = ADP + protein N-phospho-L-histidine.. Functionally, acts as a receptor histidine kinase for a signal transduction pathway. This protein undergoes an ATP-dependent autophosphorylation at a conserved histidine residue in the kinase core, and a phosphoryl group is then transferred to a conserved aspartate residue in the receiver domain. The chain is Hybrid signal transduction histidine kinase M (dhkM) from Dictyostelium discoideum (Social amoeba).